A 396-amino-acid chain; its full sequence is Pyridinium-3,5-bisthiocarboxylic acid mononucleotide nickel insertion protein (396 aa).

It belongs to the LarC family.

The catalysed reaction is Ni(II)-pyridinium-3,5-bisthiocarboxylate mononucleotide = pyridinium-3,5-bisthiocarboxylate mononucleotide + Ni(2+). In terms of biological role, involved in the biosynthesis of a nickel-pincer cofactor ((SCS)Ni(II) pincer complex). Binds Ni(2+), and functions in nickel delivery to pyridinium-3,5-bisthiocarboxylic acid mononucleotide (P2TMN), to form the mature cofactor. Is thus probably required for the activation of nickel-pincer cofactor-dependent enzymes. The sequence is that of Pyridinium-3,5-bisthiocarboxylic acid mononucleotide nickel insertion protein from Moorella thermoacetica (strain ATCC 39073 / JCM 9320).